We begin with the raw amino-acid sequence, 198 residues long: NADH-quinone oxidoreductase subunit C (198 aa).

It belongs to the complex I 30 kDa subunit family. In terms of assembly, NDH-1 is composed of 14 different subunits. Subunits NuoB, C, D, E, F, and G constitute the peripheral sector of the complex.

The protein localises to the cell inner membrane. The catalysed reaction is a quinone + NADH + 5 H(+)(in) = a quinol + NAD(+) + 4 H(+)(out). NDH-1 shuttles electrons from NADH, via FMN and iron-sulfur (Fe-S) centers, to quinones in the respiratory chain. The immediate electron acceptor for the enzyme in this species is believed to be ubiquinone. Couples the redox reaction to proton translocation (for every two electrons transferred, four hydrogen ions are translocated across the cytoplasmic membrane), and thus conserves the redox energy in a proton gradient. The protein is NADH-quinone oxidoreductase subunit C of Herminiimonas arsenicoxydans.